A 226-amino-acid chain; its full sequence is uncharacterized protein (226 aa).

The RNase H type-1 domain maps to 71-207 (EPDDITVYFD…ADGLAKKILS (137 aa)).

This is an uncharacterized protein from Bacillus subtilis (strain 168).